Reading from the N-terminus, the 552-residue chain is Phosphoribosylaminoimidazole carboxylase (552 aa).

The 188-residue stretch at 108-295 folds into the ATP-grasp domain; sequence KQHLQVFKIA…QFEAHLRAIC (188 aa). An ATP-binding site is contributed by 134 to 189; the sequence is GQEFGYPFVLKSKTLAYDGRGNYVVHQPSEIPTAIKALGDRPLYVEKFVPFSMEIA.

This sequence in the C-terminal section; belongs to the AIR carboxylase family. Class I subfamily.

It carries out the reaction 5-amino-1-(5-phospho-D-ribosyl)imidazole-4-carboxylate + H(+) = 5-amino-1-(5-phospho-beta-D-ribosyl)imidazole + CO2. It functions in the pathway purine metabolism; IMP biosynthesis via de novo pathway; 5-amino-1-(5-phospho-D-ribosyl)imidazole-4-carboxylate from 5-amino-1-(5-phospho-D-ribosyl)imidazole (carboxylase route): step 1/1. In Schizosaccharomyces pombe (strain 972 / ATCC 24843) (Fission yeast), this protein is Phosphoribosylaminoimidazole carboxylase (ade6).